Reading from the N-terminus, the 208-residue chain is 3-isopropylmalate dehydratase small subunit (208 aa).

The protein belongs to the LeuD family. LeuD type 1 subfamily. Heterodimer of LeuC and LeuD.

The enzyme catalyses (2R,3S)-3-isopropylmalate = (2S)-2-isopropylmalate. Its pathway is amino-acid biosynthesis; L-leucine biosynthesis; L-leucine from 3-methyl-2-oxobutanoate: step 2/4. Functionally, catalyzes the isomerization between 2-isopropylmalate and 3-isopropylmalate, via the formation of 2-isopropylmaleate. The chain is 3-isopropylmalate dehydratase small subunit from Gluconobacter oxydans (strain 621H) (Gluconobacter suboxydans).